Here is an 835-residue protein sequence, read N- to C-terminus: Ion-translocating oxidoreductase complex subunit C (835 aa).

2 4Fe-4S ferredoxin-type domains span residues 368 to 397 (YAPP…QQLY) and 407 to 436 (KSEE…IQYF). [4Fe-4S] cluster-binding residues include Cys377, Cys380, Cys383, Cys387, Cys416, Cys419, Cys422, and Cys426. The segment covering 468-489 (AREEQERKARAQKAMEARRQEM) has biased composition (basic and acidic residues). Disordered regions lie at residues 468–492 (AREE…MKTA), 540–574 (QRKA…SKSA), 586–618 (KAAQ…AEDP), 634–666 (KAAQ…ADDP), 682–714 (KAAQ…ADDP), 730–762 (KAAQ…AEDP), and 778–811 (KAAQ…EDPR). A compositionally biased stretch (polar residues) spans 552–561 (TQNTDVSQVE). Residues 648-657 (SSSNTLSVGN) are compositionally biased toward polar residues. Composition is skewed to polar residues over residues 745–756 (SSDTLSVGNETE) and 793–804 (SSDTLSVGNETE).

This sequence belongs to the 4Fe4S bacterial-type ferredoxin family. RnfC subfamily. As to quaternary structure, the complex is composed of six subunits: RnfA, RnfB, RnfC, RnfD, RnfE and RnfG. The cofactor is [4Fe-4S] cluster.

The protein localises to the cell inner membrane. Part of a membrane-bound complex that couples electron transfer with translocation of ions across the membrane. In Pasteurella multocida (strain Pm70), this protein is Ion-translocating oxidoreductase complex subunit C.